The primary structure comprises 398 residues: Cysteine desulfurase (398 aa).

Pyridoxal 5'-phosphate is bound by residues Gly74–Thr75, Asn155, Gln182, and Cys202–His204. Lys205 carries the N6-(pyridoxal phosphate)lysine modification. Basic and acidic residues predominate over residues Gly230 to Ala244. The segment at Gly230 to Ala253 is disordered. Catalysis depends on Cys327, which acts as the Cysteine persulfide intermediate. Residue Cys327 participates in [2Fe-2S] cluster binding.

This sequence belongs to the class-V pyridoxal-phosphate-dependent aminotransferase family. NifS/IscS subfamily. In terms of assembly, homodimer. It depends on pyridoxal 5'-phosphate as a cofactor.

The enzyme catalyses (sulfur carrier)-H + L-cysteine = (sulfur carrier)-SH + L-alanine. In terms of biological role, catalyzes the removal of elemental sulfur atoms from cysteine to produce alanine. Seems to participate in the biosynthesis of the nitrogenase metalloclusters by providing the inorganic sulfur required for the Fe-S core formation. In Azospirillum brasilense, this protein is Cysteine desulfurase.